Reading from the N-terminus, the 607-residue chain is Nexilin (607 aa).

Residues 1–14 are compositionally biased toward basic and acidic residues; the sequence is MNDVSQKAEIKEML. 2 disordered regions span residues 1–143 and 165–268; these read MNDV…EDKM and ETEA…RRRI. Ser-16 is subject to Phosphoserine. 4 stretches are compositionally biased toward basic and acidic residues: residues 40–85, 120–143, 167–221, and 228–268; these read GKFD…RAEQ, KTKDPEDLDREEGNGRTNHEEDKM, EAKK…HMVN, and DRET…RRRI. A Phosphoserine modification is found at Ser-172. 3 positions are modified to phosphoserine: Ser-281, Ser-288, and Ser-296. Position 301 is a phosphothreonine (Thr-301). 2 disordered regions span residues 419-444 and 480-514; these read NFHEDDDVDVRPAKKSESPFTHKVNM and AALQKKREDEEEEEGSIVNGSTTEDEEQTRSGAPW. Phosphoserine occurs at positions 495 and 500. A Phosphothreonine modification is found at Thr-502. The Ig-like domain maps to 513–601; it reads PWFKKPLRNT…GSAASTCILT (89 aa).

In terms of assembly, interacts with F-actin.

The protein resides in the cytoplasm. It is found in the cytoskeleton. It localises to the cell junction. Its subcellular location is the adherens junction. The protein localises to the myofibril. The protein resides in the sarcomere. It is found in the z line. In terms of biological role, involved in regulating cell migration through association with the actin cytoskeleton. Has an essential role in the maintenance of Z line and sarcomere integrity. This is Nexilin from Mus musculus (Mouse).